The sequence spans 475 residues: MTVVIAGAGPTGLTLACELTRRGIACRVLDKAPDLFPGSRGKGLSPRTQEVFDDLGIAPAINSGGMAMPPFRIYAGHEVVAERSLVEMLGTDIPSGPGIPYPGFWLVPQWRTDEILLDRLRQFGGDVEFNCEVVGFTQRSDAVSVMVSQGGAPELLHASYLVGADGGRSTVRKMLGVGFAGETFERERTLIGDVRADGLEGSFCHVLTRDGQVSERFSLWNLPGSEHYQFVANMATEDVPALTLDAVQKLVVDRSGRDDIVLRDLRWISLYRVNARMVDRFRVGRVILAGDAAHVHSSAGGQGLNTSVQDAYNLGWKLAAVIYGAPEKLLDTYEEERMPVAASVLGLSTDLHHRNFAPAKGPAPQLHQMDITYRGCSLAVDDRVFQGNLRAGDRAPDALLDNGVRLFDVLRGTHFTLLTFGAQAPVIADVCIQQMTPSPDYDVTATTLVLVRPDGYIGVMTESGRTVLEYLARVV.

This sequence belongs to the aromatic-ring hydroxylase family. Requires FAD as cofactor.

The protein localises to the cytoplasm. The catalysed reaction is a tetracycline + NADPH + O2 + H(+) = an 11a-hydroxytetracycline + NADP(+) + H2O. The enzyme catalyses tetracycline + NADPH + O2 + H(+) = 11a-hydroxytetracycline + NADP(+) + H2O. With respect to regulation, inhibited by anhydrotetracycline. In terms of biological role, an FAD-requiring monooxygenase active on some tetracycline antibiotic derivatives, which leads to their inactivation. Hydroxylates carbon 11a of tetracycline and some analogs. Confers resistance to tetracycline and doxycycline via an oxidoreductase activity; probably monooxygenates the antibiotics. Does not act on tigecycline. The protein is Flavin-dependent monooxygenase of Mycobacteroides abscessus (strain ATCC 19977 / DSM 44196 / CCUG 20993 / CIP 104536 / JCM 13569 / NCTC 13031 / TMC 1543 / L948) (Mycobacterium abscessus).